We begin with the raw amino-acid sequence, 154 residues long: Cindoxin (154 aa).

One can recognise a Flavodoxin-like domain in the interval 3 to 145 (ALILYGTETG…TAEEWAREIL (143 aa)). FMN contacts are provided by residues 9–13 (TETGN) and 89–120 (VFGL…TQVG).

The cofactor is FMN.

Involved in the degradation of cineol (eucalyptol). The FMN protein, cindoxin, shuttles electrons between the FAD-containing cindoxin reductase (CinB) and 1,8-cineole 2-endo-monooxygenase (CinA). In Citrobacter braakii, this protein is Cindoxin (cinC).